A 250-amino-acid chain; its full sequence is Isoprenyl transferase (250 aa).

Residue aspartate 26 is part of the active site. Aspartate 26 contacts Mg(2+). Residues 27 to 30 (GNGR), tryptophan 31, arginine 39, histidine 43, and 71 to 73 (STE) each bind substrate. The active-site Proton acceptor is asparagine 74. Residues tryptophan 75, arginine 77, arginine 198, and 204 to 206 (RLS) contribute to the substrate site. A Mg(2+)-binding site is contributed by glutamate 217.

Belongs to the UPP synthase family. In terms of assembly, homodimer. Requires Mg(2+) as cofactor.

In terms of biological role, catalyzes the condensation of isopentenyl diphosphate (IPP) with allylic pyrophosphates generating different type of terpenoids. This chain is Isoprenyl transferase, found in Streptococcus agalactiae serotype V (strain ATCC BAA-611 / 2603 V/R).